The sequence spans 259 residues: Probable iron export permease protein FetB (259 aa).

The Periplasmic segment spans residues 1-5 (MNSHN). The chain crosses the membrane as a helical span at residues 6-26 (ITNESLALALMLVVVAILISH). The Cytoplasmic segment spans residues 27–35 (KEKLALEKD). 2 helical membrane passes run 36 to 56 (ILWS…VLKY) and 57 to 77 (IFSV…CFNA). Over 78 to 91 (AWNAQKRSKYIAKA) the chain is Cytoplasmic. Residues 92 to 112 (FISSFIAITVGAGITLAVLIL) traverse the membrane as a helical segment. The Periplasmic portion of the chain corresponds to 113–117 (SGSIE). The chain crosses the membrane as a helical span at residues 118 to 138 (FIPMQVIPIAGMIAGNAMVAV). The Cytoplasmic portion of the chain corresponds to 139 to 191 (GLCYNNLGQRVISEQQQIQEKLSLGATPKQASAILIRDSIRAALIPTVDSAKT). Residues 192–212 (VGLVSLPGMMSGLIFAGIDPV) traverse the membrane as a helical segment. At 213-218 (KAIKYQ) the chain is on the periplasmic side. A helical membrane pass occupies residues 219–239 (IMVTFMLLSTASLSTIIACYL). Over 240–259 (TYRKFYNSRHQLVVTQLKKK) the chain is Cytoplasmic.

The protein belongs to the UPF0014 family. In terms of assembly, the complex is composed of two ATP-binding proteins (FetA) and two transmembrane proteins (FetB).

The protein resides in the cell inner membrane. Functionally, part of the ABC transporter complex FetAB, which is probably involved in iron export and enhances resistance to H(2)O(2)-mediated oxidative stress. Probably responsible for the translocation of the substrate across the membrane. The chain is Probable iron export permease protein FetB (fetB) from Escherichia coli (strain K12).